The sequence spans 222 residues: Probable nicotinate-nucleotide adenylyltransferase (222 aa).

The protein belongs to the NadD family.

It catalyses the reaction nicotinate beta-D-ribonucleotide + ATP + H(+) = deamido-NAD(+) + diphosphate. It functions in the pathway cofactor biosynthesis; NAD(+) biosynthesis; deamido-NAD(+) from nicotinate D-ribonucleotide: step 1/1. In terms of biological role, catalyzes the reversible adenylation of nicotinate mononucleotide (NaMN) to nicotinic acid adenine dinucleotide (NaAD). The polypeptide is Probable nicotinate-nucleotide adenylyltransferase (Pseudomonas syringae pv. tomato (strain ATCC BAA-871 / DC3000)).